Consider the following 503-residue polypeptide: Endoglycoceramidase (503 aa).

Positions 1–21 (MAETQPLVFVLMSISAILTAG) are cleaved as a signal peptide. Asparagine 72, asparagine 108, and asparagine 205 each carry an N-linked (GlcNAc...) asparagine glycan. The active-site Proton donor is glutamate 239. Residues asparagine 307, asparagine 409, and asparagine 485 are each glycosylated (N-linked (GlcNAc...) asparagine).

The protein belongs to the glycosyl hydrolase 5 (cellulase A) family.

The protein localises to the secreted. It localises to the nematocyst. The enzyme catalyses an oligoglycosyl-(1-&gt;4)-beta-D-glucosyl-(1&lt;-&gt;1)-ceramide + H2O = an oligoglycosyl-(1-&gt;4)-D-glucose + an N-acyl-sphingoid base. Its activity is regulated as follows. Completely inhibited by Hg(2+). Cu(2+) and zinc have no effect on enzyme activity. Lithium, potassium, manganese, Ni(2+), calcium, magnesium and EDTA have no significant effect on enzyme activity. Enzyme requires presence of detergents such as Triton X-100 and Lubrol PX for the hydrolysis of glycosphingolipids. Taurodeoxycholate strongly inhibits the enzyme activity and SDS completely inhibits the enzyme activity. Its function is as follows. Hydrolysis of the glycosidic linkage between oligosaccharides and ceramides of glycosphingolipids, especially b-series polysialogangliosides. The sequence is that of Endoglycoceramidase from Cyanea nozakii (Jellyfish).